We begin with the raw amino-acid sequence, 379 residues long: Type II methyltransferase M.CvrRI (379 aa).

Belongs to the N(4)/N(6)-methyltransferase family.

It carries out the reaction a 2'-deoxyadenosine in DNA + S-adenosyl-L-methionine = an N(6)-methyl-2'-deoxyadenosine in DNA + S-adenosyl-L-homocysteine + H(+). Functionally, a gamma subtype methylase, recognizes the double-stranded sequence 5'-TGCA-3', methylates A-4 on both strands, and protects the DNA from cleavage by the CviRI endonuclease. This is Type II methyltransferase M.CvrRI (CVIRIM) from Chlorella (PBCV-XZ-6E).